Reading from the N-terminus, the 417-residue chain is Gamma-glutamyl phosphate reductase (417 aa).

Belongs to the gamma-glutamyl phosphate reductase family.

The protein localises to the cytoplasm. It carries out the reaction L-glutamate 5-semialdehyde + phosphate + NADP(+) = L-glutamyl 5-phosphate + NADPH + H(+). The protein operates within amino-acid biosynthesis; L-proline biosynthesis; L-glutamate 5-semialdehyde from L-glutamate: step 2/2. Functionally, catalyzes the NADPH-dependent reduction of L-glutamate 5-phosphate into L-glutamate 5-semialdehyde and phosphate. The product spontaneously undergoes cyclization to form 1-pyrroline-5-carboxylate. This is Gamma-glutamyl phosphate reductase from Haemophilus influenzae (strain PittGG).